A 129-amino-acid chain; its full sequence is Thyroid hormone receptor alpha (129 aa).

One can recognise an NR LBD domain in the interval Ala26–Arg129. A 3,3',5-triiodo-L-thyronine-binding site is contributed by Arg91.

Belongs to the nuclear hormone receptor family. NR1 subfamily.

It is found in the nucleus. In terms of biological role, nuclear hormone receptor that can act as a repressor or activator of transcription. High affinity receptor for thyroid hormones, including triiodothyronine and thyroxine. The protein is Thyroid hormone receptor alpha (thra1) of Sparus aurata (Gilthead sea bream).